The sequence spans 397 residues: 3-ketoacyl-CoA thiolase, mitochondrial (397 aa).

The transit peptide at 1-16 directs the protein to the mitochondrion; not cleaved; it reads MALLRGVFVVAAKRTP. Position 25 is an N6-acetyllysine; alternate (K25). N6-succinyllysine; alternate is present on K25. K45 carries the post-translational modification N6-succinyllysine. The active-site Acyl-thioester intermediate is C92. T119 carries the phosphothreonine modification. Position 121 is a phosphoserine (S121). Y127 carries the post-translational modification Phosphotyrosine. T136 is modified (phosphothreonine). Position 137 is an N6-acetyllysine; alternate (K137). K137 carries the N6-succinyllysine; alternate modification. At S140 the chain carries Phosphoserine. Residues K143, K171, K191, and K209 each carry the N6-acetyllysine; alternate modification. N6-succinyllysine; alternate occurs at positions 143, 171, 191, and 209. N6-succinyllysine is present on residues K211, K212, and K214. The CoA site is built by R224 and T227. An N6-acetyllysine; alternate modification is found at K234. An N6-succinyllysine; alternate modification is found at K234. K240 carries the post-translational modification N6-succinyllysine. N6-acetyllysine is present on K241. Residue S251 participates in CoA binding. 2 positions are modified to N6-acetyllysine: K269 and K270. An N6-acetyllysine; alternate modification is found at K305. Residue K305 is modified to N6-succinyllysine; alternate. S310 carries the phosphoserine modification. At K312 the chain carries N6-acetyllysine; alternate. At K312 the chain carries N6-succinyllysine; alternate. The residue at position 333 (S333) is a Phosphoserine. N6-acetyllysine is present on residues K340 and K375. Catalysis depends on C382, which acts as the Proton donor/acceptor.

The protein belongs to the thiolase-like superfamily. Thiolase family. In terms of assembly, homotetramer. Interacts with BNIP3.

It is found in the mitochondrion. The catalysed reaction is an acyl-CoA + acetyl-CoA = a 3-oxoacyl-CoA + CoA. It carries out the reaction 2 acetyl-CoA = acetoacetyl-CoA + CoA. It catalyses the reaction acetyl-CoA + H2O = acetate + CoA + H(+). The enzyme catalyses propanoyl-CoA + H2O = propanoate + CoA + H(+). The catalysed reaction is butanoyl-CoA + H2O = butanoate + CoA + H(+). It carries out the reaction hexanoyl-CoA + H2O = hexanoate + CoA + H(+). It catalyses the reaction octanoyl-CoA + H2O = octanoate + CoA + H(+). The enzyme catalyses decanoyl-CoA + H2O = decanoate + CoA + H(+). The catalysed reaction is dodecanoyl-CoA + H2O = dodecanoate + CoA + H(+). It carries out the reaction tetradecanoyl-CoA + H2O = tetradecanoate + CoA + H(+). It catalyses the reaction hexadecanoyl-CoA + H2O = hexadecanoate + CoA + H(+). Its pathway is lipid metabolism; fatty acid beta-oxidation. Its function is as follows. In the production of energy from fats, this is one of the enzymes that catalyzes the last step of the mitochondrial beta-oxidation pathway, an aerobic process breaking down fatty acids into acetyl-CoA. Using free coenzyme A/CoA, catalyzes the thiolytic cleavage of medium- to long-chain unbranched 3-oxoacyl-CoAs into acetyl-CoA and a fatty acyl-CoA shortened by two carbon atoms. Also catalyzes the condensation of two acetyl-CoA molecules into acetoacetyl-CoA and could be involved in the production of ketone bodies. Also displays hydrolase activity on various fatty acyl-CoAs. Thereby, could be responsible for the production of acetate in a side reaction to beta-oxidation. Abolishes BNIP3-mediated apoptosis and mitochondrial damage. This is 3-ketoacyl-CoA thiolase, mitochondrial (ACAA2) from Homo sapiens (Human).